A 571-amino-acid polypeptide reads, in one-letter code: Ubiquitin-like-specific protease 1C (571 aa).

The disordered stretch occupies residues 221 to 260 (SESKDPKGDRRPNEAYGKGKPNESSPYLLVDDDDGDDDKV). Over residues 222–233 (ESKDPKGDRRPN) the composition is skewed to basic and acidic residues. Residues His-426, Asp-449, and Cys-512 contribute to the active site.

The protein belongs to the peptidase C48 family.

The protein resides in the nucleus. It is found in the nucleoplasm. Its function is as follows. Protease that catalyzes two essential functions in the SUMO pathway: processing of full-length SUMOs to their mature forms and deconjugation of SUMO from targeted proteins. Cleaves precursors of SUM1 and SUM2, but not of SUM3 or SUM5. Able to release SUM1 and SUM2 from conjugates, but unable to cleave SUM3. Protease activity mainly directed at deconjugating SUM1 and SUM2 from their target proteins. Regulates salt stress responses and flowering time. Redundant with ULP1D. The sequence is that of Ubiquitin-like-specific protease 1C (ULP1C) from Arabidopsis thaliana (Mouse-ear cress).